A 293-amino-acid polypeptide reads, in one-letter code: Protein PET54 (293 aa).

The protein localises to the mitochondrion inner membrane. In terms of biological role, activator of specific mitochondrial mRNAs. PET54 is involved in the excision of intron aI5-beta from pre-mRNA for cytochrome c oxidase I (COX1) and plays a role in promoting the translation of COX3. This is Protein PET54 (PET54) from Saccharomyces cerevisiae (strain ATCC 204508 / S288c) (Baker's yeast).